A 295-amino-acid polypeptide reads, in one-letter code: GDP-polyphosphate phosphotransferase (295 aa).

Residues 1 to 28 are disordered; that stretch reads MDIPSVDVSTATNDGASSRAKGHRSAAP. Over residues 7–16 the composition is skewed to polar residues; it reads DVSTATNDGA. A phosphohistidine mark is found at His-115 and His-247.

The protein belongs to the polyphosphate kinase 2 (PPK2) family. Class I subfamily. As to quaternary structure, interacts with Ndk. In terms of processing, autophosphorylated at His-115 and His-247 using polyP as a phosphate donor.

The enzyme catalyses [phosphate](n) + GTP = [phosphate](n+1) + GDP. Functionally, uses inorganic polyphosphate (polyP) as a donor to convert GDP to GTP. In addition, modulates nucleotide triphosphate synthesis catalyzed by the nucleoside diphosphate kinase (Ndk) in favor of GTP production over CTP or UTP. Plays an important role in survival of M.tuberculosis in macrophages. The protein is GDP-polyphosphate phosphotransferase of Mycobacterium tuberculosis (strain ATCC 25618 / H37Rv).